A 449-amino-acid polypeptide reads, in one-letter code: Keratin, type I cuticular Ha7 (449 aa).

Residues 1 to 104 (MTSFYSTSSC…YGKNTLNGHE (104 aa)) are head. The IF rod domain occupies 104-415 (EKETMKFLND…NLLESEDCKL (312 aa)). The interval 105-139 (KETMKFLNDRLANYLEKVRQLEQENAELETTLLER) is coil 1A. Positions 140–150 (SKCHESTVCPD) are linker 1. Residues 151–251 (YQSYFRTIEE…HEQEVKILRS (101 aa)) are coil 1B. The linker 12 stretch occupies residues 252–267 (QLGEKFRIELDIEPTI). A coil 2 region spans residues 268-411 (DLNRVLGEMR…ATYRNLLESE (144 aa)). Positions 416 to 449 (PCNPCSTPASCTSCPSCGPVTGGSPSGHGASMGR) are tail.

It belongs to the intermediate filament family.

The polypeptide is Keratin, type I cuticular Ha7 (KRT37) (Homo sapiens (Human)).